The chain runs to 616 residues: Proline--tRNA ligase (616 aa).

It belongs to the class-II aminoacyl-tRNA synthetase family. ProS type 1 subfamily. As to quaternary structure, homodimer.

It is found in the cytoplasm. The catalysed reaction is tRNA(Pro) + L-proline + ATP = L-prolyl-tRNA(Pro) + AMP + diphosphate. Catalyzes the attachment of proline to tRNA(Pro) in a two-step reaction: proline is first activated by ATP to form Pro-AMP and then transferred to the acceptor end of tRNA(Pro). As ProRS can inadvertently accommodate and process non-cognate amino acids such as alanine and cysteine, to avoid such errors it has two additional distinct editing activities against alanine. One activity is designated as 'pretransfer' editing and involves the tRNA(Pro)-independent hydrolysis of activated Ala-AMP. The other activity is designated 'posttransfer' editing and involves deacylation of mischarged Ala-tRNA(Pro). The misacylated Cys-tRNA(Pro) is not edited by ProRS. This chain is Proline--tRNA ligase, found in Streptococcus mutans serotype c (strain ATCC 700610 / UA159).